Consider the following 509-residue polypeptide: Cytochrome P450 monooxygenase aba1 (509 aa).

An N-terminal signal peptide occupies residues 1 to 31 (MSNSILNLGSFACLLSLGSIVLWYTISAVLA). Asn-402 is a glycosylation site (N-linked (GlcNAc...) asparagine). Cys-451 serves as a coordination point for heme. Asn-462 carries N-linked (GlcNAc...) asparagine glycosylation.

The protein belongs to the cytochrome P450 family. Heme serves as cofactor.

The protein operates within hormone biosynthesis. Cytochrome P450 monooxygenase; part of the gene cluster that mediates the biosynthesis of abscisic acid (ABA), a phytohormone that acts antagonistically toward salicylic acid (SA), jasmonic acid (JA) and ethylene (ETH) signaling, to impede plant defense responses. The first step of the pathway catalyzes the reaction from farnesyl diphosphate to alpha-ionylideneethane performed by the alpha-ionylideneethane synthase aba3 via a three-step reaction mechanism involving 2 neutral intermediates, beta-farnesene and allofarnesene. The cytochrome P450 monooxygenase aba1 might then be involved in the conversion of alpha-ionylideneethane to alpha-ionylideneacetic acid. Alpha-ionylideneacetic acid is further converted to abscisic acid in 2 steps involving the cytochrome P450 monooxygenase aba2 and the short-chain dehydrogenase/reductase aba4, via the intermediates 1'-deoxy-ABA or 1',4'-trans-diol-ABA, depending on the order of action of these 2 enzymes. Aba2 is responsible for the hydroxylation of carbon atom C-1' and aba4 might be involved in the oxidation of the C-4' carbon atom. The chain is Cytochrome P450 monooxygenase aba1 (aba1) from Botryotinia fuckeliana (strain B05.10) (Noble rot fungus).